The chain runs to 107 residues: Phosphoribosyl-ATP pyrophosphatase (107 aa).

The protein belongs to the PRA-PH family.

It localises to the cytoplasm. The enzyme catalyses 1-(5-phospho-beta-D-ribosyl)-ATP + H2O = 1-(5-phospho-beta-D-ribosyl)-5'-AMP + diphosphate + H(+). The protein operates within amino-acid biosynthesis; L-histidine biosynthesis; L-histidine from 5-phospho-alpha-D-ribose 1-diphosphate: step 2/9. The polypeptide is Phosphoribosyl-ATP pyrophosphatase (Zymomonas mobilis subsp. mobilis (strain ATCC 31821 / ZM4 / CP4)).